The following is a 120-amino-acid chain: Small ribosomal subunit protein uS13 (120 aa).

Residues 94–120 are disordered; it reads GLPLRGQRTRTNARTRKGPRKAIAGKK.

Belongs to the universal ribosomal protein uS13 family. Part of the 30S ribosomal subunit. Forms a loose heterodimer with protein S19. Forms two bridges to the 50S subunit in the 70S ribosome.

Located at the top of the head of the 30S subunit, it contacts several helices of the 16S rRNA. In the 70S ribosome it contacts the 23S rRNA (bridge B1a) and protein L5 of the 50S subunit (bridge B1b), connecting the 2 subunits; these bridges are implicated in subunit movement. Contacts the tRNAs in the A and P-sites. The sequence is that of Small ribosomal subunit protein uS13 from Azoarcus sp. (strain BH72).